A 378-amino-acid chain; its full sequence is Integrator complex assembly factor WDR73 (378 aa).

6 WD repeats span residues aspartate 73–valine 113, lysine 121–leucine 163, lysine 167–threonine 205, asparagine 214–proline 255, glutamine 266–alanine 305, and glutamate 322–tryptophan 371.

The protein belongs to the WD repeat WDR73 family. As to quaternary structure, interacts with INTS9 and INTS11; the interaction is direct. Part of the multiprotein complex composed of BRAT1, WDR73, as well as integrator complex subunits INTS9 and INTS11. Expressed in kidney and brain. In the kidney, expressed in glomeruli, most probably in podocytes, and in tubules (at protein level). In the brain, expressed in the cerebellum, with high levels in Purkinje cells and their projecting axons, in the deep cerebellar nuclei and in pyramidal neurons of the cerebral cortex (at protein level). In the white matter, mainly present in astrocytes, but not in oligodendrocytes (at protein level). Also highly expressed in endothelial cells of cerebral capillaries (at protein level).

It localises to the cytoplasm. Its subcellular location is the cytoskeleton. It is found in the spindle. The protein localises to the spindle pole. The protein resides in the cleavage furrow. In terms of biological role, component of a multiprotein complex required for the assembly of the RNA endonuclease module of the integrator complex. Associates with INTS9 and INTS11 in the cytoplasm, stabilizing the INTS9-INTS11 heterodimer and blocking the active site of INTS11. BRAT1 then joins the complex and plugs the active site of INTS11, leading to WDR73 release and nuclear import of INTS9 and INTS11. The polypeptide is Integrator complex assembly factor WDR73 (Homo sapiens (Human)).